Reading from the N-terminus, the 518-residue chain is Chromosomal replication initiator protein DnaA (518 aa).

A domain I, interacts with DnaA modulators region spans residues 1 to 72 (MTLAEFWPLC…VREELAAGRS (72 aa)). Positions 72-180 (SAFVFKPGEG…DAEEARYEQT (109 aa)) are domain II. The segment at 145-172 (EPRQAAGSASRPESVAVAKARTDVQRDA) is disordered. The domain III, AAA+ region stretch occupies residues 181–397 (NLSPDYTFDT…GAFNRVGASS (217 aa)). The ATP site is built by G225, G227, K228, and T229. The interval 398-518 (RFMNRPVIDI…YEKLLILIQN (121 aa)) is domain IV, binds dsDNA.

Belongs to the DnaA family. In terms of assembly, oligomerizes as a right-handed, spiral filament on DNA at oriC.

The protein localises to the cytoplasm. In terms of biological role, plays an essential role in the initiation and regulation of chromosomal replication. ATP-DnaA binds to the origin of replication (oriC) to initiate formation of the DNA replication initiation complex once per cell cycle. Binds the DnaA box (a 9 base pair repeat at the origin) and separates the double-stranded (ds)DNA. Forms a right-handed helical filament on oriC DNA; dsDNA binds to the exterior of the filament while single-stranded (ss)DNA is stabiized in the filament's interior. The ATP-DnaA-oriC complex binds and stabilizes one strand of the AT-rich DNA unwinding element (DUE), permitting loading of DNA polymerase. After initiation quickly degrades to an ADP-DnaA complex that is not apt for DNA replication. Binds acidic phospholipids. The chain is Chromosomal replication initiator protein DnaA from Neisseria meningitidis serogroup B (strain ATCC BAA-335 / MC58).